Reading from the N-terminus, the 148-residue chain is MKISVFNGPNLNALGTREPGIYGADTLADIEAACRTTAADLGVDLDFLQTNQEGALVDAFHAARDTSDGVVINAGAYTHTSIALRDAISATELPTVELHLSNTHAREAFRHHSMIAPVCVGLILGFGAYGYPLAVTALVQHLKQGNAP.

Residue Tyr22 is the Proton acceptor of the active site. Asn73, His79, and Asp86 together coordinate substrate. Catalysis depends on His99, which acts as the Proton donor. Substrate-binding positions include 100–101 and Arg110; that span reads LS.

Belongs to the type-II 3-dehydroquinase family. As to quaternary structure, homododecamer.

It carries out the reaction 3-dehydroquinate = 3-dehydroshikimate + H2O. It functions in the pathway metabolic intermediate biosynthesis; chorismate biosynthesis; chorismate from D-erythrose 4-phosphate and phosphoenolpyruvate: step 3/7. Catalyzes a trans-dehydration via an enolate intermediate. This is 3-dehydroquinate dehydratase from Jannaschia sp. (strain CCS1).